A 274-amino-acid chain; its full sequence is N-acetylmuramic acid 6-phosphate etherase (274 aa).

An SIS domain is found at 52 to 215 (IIPRMEQGGR…STSIMIRLGR (164 aa)). Glu-80 functions as the Proton donor in the catalytic mechanism. Glu-111 is a catalytic residue.

Belongs to the GCKR-like family. MurNAc-6-P etherase subfamily. As to quaternary structure, homodimer.

It carries out the reaction N-acetyl-D-muramate 6-phosphate + H2O = N-acetyl-D-glucosamine 6-phosphate + (R)-lactate. It functions in the pathway amino-sugar metabolism; N-acetylmuramate degradation. Specifically catalyzes the cleavage of the D-lactyl ether substituent of MurNAc 6-phosphate, producing GlcNAc 6-phosphate and D-lactate. The polypeptide is N-acetylmuramic acid 6-phosphate etherase (Porphyromonas gingivalis (strain ATCC BAA-308 / W83)).